The chain runs to 193 residues: Penicillin-binding protein activator LpoB (193 aa).

Residues 1 to 16 form the signal peptide; it reads MKKMLFVVAAVFLLAG. A lipid anchor (N-palmitoyl cysteine) is attached at cysteine 17. Cysteine 17 carries the S-diacylglycerol cysteine lipid modification. A disordered region spans residues 23–50; sequence QQPPAPVEPVTPTEPTEPPKPIEPPIEV. The span at 37 to 46 shows a compositional bias: pro residues; it reads PTEPPKPIEP.

Belongs to the LpoB family. Interacts with PBP1b.

It is found in the cell outer membrane. Functionally, regulator of peptidoglycan synthesis that is essential for the function of penicillin-binding protein 1B (PBP1b). In Proteus mirabilis (strain HI4320), this protein is Penicillin-binding protein activator LpoB.